A 331-amino-acid chain; its full sequence is Fructose-1,6-bisphosphatase class 1 (331 aa).

Mg(2+) contacts are provided by E88, D108, L110, and D111. Substrate contacts are provided by residues 111-114 (DGSS) and N201. Residue E273 coordinates Mg(2+).

The protein belongs to the FBPase class 1 family. In terms of assembly, homotetramer. Mg(2+) serves as cofactor.

The protein localises to the cytoplasm. The catalysed reaction is beta-D-fructose 1,6-bisphosphate + H2O = beta-D-fructose 6-phosphate + phosphate. Its pathway is carbohydrate biosynthesis; gluconeogenesis. The protein is Fructose-1,6-bisphosphatase class 1 of Methylobacillus flagellatus (strain ATCC 51484 / DSM 6875 / VKM B-1610 / KT).